The primary structure comprises 586 residues: Malonate--CoA ligase ACSF3, mitochondrial (586 aa).

Residues 1–89 (MPLPYVGMAL…SREICQLRAC (89 aa)) constitute a mitochondrion transit peptide. ATP contacts are provided by residues 203–211 (TSGTTGRPK), Asp-457, Arg-471, and Lys-563.

It belongs to the ATP-dependent AMP-binding enzyme family.

Its subcellular location is the mitochondrion. The catalysed reaction is tetracosanoate + ATP + CoA = tetracosanoyl-CoA + AMP + diphosphate. The enzyme catalyses malonate + ATP + CoA = malonyl-CoA + AMP + diphosphate. In terms of biological role, catalyzes the initial reaction in intramitochondrial fatty acid synthesis, by activating malonate and methylmalonate, but not acetate, into their respective CoA thioester. May have some preference toward very-long-chain substrates. This chain is Malonate--CoA ligase ACSF3, mitochondrial, found in Bos taurus (Bovine).